The sequence spans 248 residues: Glutathione S-transferase omega-2 (248 aa).

The GST N-terminal domain occupies 22–101 (GVIRIYSMRF…YLDDVYPGRK (80 aa)). Cys-32 functions as the Nucleophile in the catalytic mechanism. Glutathione contacts are provided by residues Lys-59, Ile-72, and 85–86 (ES). Residues 106 to 231 (DPYERARQKM…VFLGFLNLYF (126 aa)) form the GST C-terminal domain.

The protein belongs to the GST superfamily. Omega family.

It catalyses the reaction RX + glutathione = an S-substituted glutathione + a halide anion + H(+). It carries out the reaction L-dehydroascorbate + 2 glutathione = glutathione disulfide + L-ascorbate. The catalysed reaction is methylarsonate + 2 glutathione + H(+) = methylarsonous acid + glutathione disulfide + H2O. Its function is as follows. Exhibits glutathione-dependent thiol transferase activity. Has high dehydroascorbate reductase activity and may contribute to the recycling of ascorbic acid. Participates in the biotransformation of inorganic arsenic and reduces monomethylarsonic acid (MMA). This Mus musculus (Mouse) protein is Glutathione S-transferase omega-2 (Gsto2).